A 410-amino-acid chain; its full sequence is Elongation factor Tu, chloroplastic (410 aa).

Positions 10 to 214 constitute a tr-type G domain; the sequence is KPHVNIGTIG…QVDAYIPTPE (205 aa). The interval 19–26 is G1; it reads GHVDHGKT. Position 19–26 (19–26) interacts with GTP; it reads GHVDHGKT. Threonine 26 provides a ligand contact to Mg(2+). The interval 60–64 is G2; that stretch reads GITIN. The tract at residues 81–84 is G3; sequence DCPG. GTP contacts are provided by residues 81 to 85 and 136 to 139; these read DCPGH and NKED. The G4 stretch occupies residues 136–139; that stretch reads NKED. Positions 174 to 176 are G5; the sequence is SAL.

The protein belongs to the TRAFAC class translation factor GTPase superfamily. Classic translation factor GTPase family. EF-Tu/EF-1A subfamily.

It is found in the plastid. It localises to the chloroplast. It carries out the reaction GTP + H2O = GDP + phosphate + H(+). Functionally, GTP hydrolase that promotes the GTP-dependent binding of aminoacyl-tRNA to the A-site of ribosomes during protein biosynthesis. This Chlorokybus atmophyticus (Soil alga) protein is Elongation factor Tu, chloroplastic (tufA).